The primary structure comprises 1254 residues: DNA polymerase gamma (1254 aa).

Residues 1125–1137 (RKKENRIDDENKK) show a composition bias toward basic and acidic residues. 2 disordered regions span residues 1125-1145 (RKKENRIDDENKKKLTRKKNT) and 1202-1240 (YKKKPSQARTASSSPIRKTAKAVHSKKLPARKSSTTNRN). Over residues 1208–1217 (QARTASSSPI) the composition is skewed to polar residues. Residues 1219 to 1231 (KTAKAVHSKKLPA) are compositionally biased toward basic residues.

This sequence belongs to the DNA polymerase type-A family. Mg(2+) serves as cofactor.

The protein localises to the mitochondrion. The enzyme catalyses DNA(n) + a 2'-deoxyribonucleoside 5'-triphosphate = DNA(n+1) + diphosphate. Involved in the replication of mitochondrial DNA. This is DNA polymerase gamma (MIP1) from Saccharomyces cerevisiae (strain ATCC 204508 / S288c) (Baker's yeast).